Consider the following 763-residue polypeptide: Thyrotropin receptor (763 aa).

The first 21 residues, 1–21 (MRQTPLLQLALLLSLPRSLGG), serve as a signal peptide directing secretion. The Extracellular segment spans residues 22–412 (KGCPSPPCEC…EFNPCEDIMG (391 aa)). Cysteine 31 and cysteine 41 are disulfide-bonded. N-linked (GlcNAc...) asparagine glycosylation is found at asparagine 77 and asparagine 99. 7 LRR repeats span residues 100–124 (LSKMTHIEIRNTRSLTYIDPGALKE), 125–150 (LPLLKFLGIFNTGLGVFPDLTKVYST), 151–174 (DVFFILEITDNPYMTSIPANAFQG), 176–199 (CNETLTLKLYNNGFTSIQGHAFNG), 201–223 (KLDAVYLNKNKYLTAIDQDAFGG), 225–248 (YSGPTLLDVSYTSVTALPSKGLEH), and 264–288 (PLTLSFLHLTRADLSYPSHCCAFKN). Residues asparagine 177 and asparagine 198 are each glycosylated (N-linked (GlcNAc...) asparagine). A glycan (N-linked (GlcNAc...) asparagine) is linked at asparagine 302. Tyrosine 384 is modified (sulfotyrosine). The chain crosses the membrane as a helical span at residues 413–440 (YKFLRIVVWFVSLLALLGNVFVLIILLT). Topologically, residues 441–449 (SHYKLTVPR) are cytoplasmic. Residues 450 to 472 (FLMCNLAFADFCMGMYLLLIASV) form a helical membrane-spanning segment. Topologically, residues 473-493 (DLYTHSEYYNHAIDWQTGPGC) are extracellular. Cysteine 493 and cysteine 568 are oxidised to a cystine. A helical membrane pass occupies residues 494 to 516 (NAAGFFTVFASELSVYTLTVITL). The Cytoplasmic segment spans residues 517 to 536 (ERWYAITFAMRLDRKMRLRH). The chain crosses the membrane as a helical span at residues 537-559 (AYAIMVGGWVCCFLLALLPLVGI). The Extracellular segment spans residues 560–579 (SSYAKVSICLPMDTETPLAL). Residues 580 to 601 (AYIILVLLLNIVAFIIVCSCYV) traverse the membrane as a helical segment. Topologically, residues 602–624 (KIYITVRNPQYNTGDKDTKIAKR) are cytoplasmic. The helical transmembrane segment at 625–648 (MAVLIFTDFMCMAPISFYALSALM) threads the bilayer. The Extracellular segment spans residues 649–659 (NKPLITVTNSK). The helical transmembrane segment at 660–681 (ILLVLFYPLNSCANPFLYAIFT) threads the bilayer. The Cytoplasmic segment spans residues 682–763 (KTFQRDVFIL…ISKEYNQTVL (82 aa)). The short motif at 761–763 (TVL) is the PDZ-binding element.

It belongs to the G-protein coupled receptor 1 family. FSH/LSH/TSH subfamily. In terms of assembly, interacts with heterodimer GPHA2:GPHB5; this interaction stimulates cAMP production. Interacts (via the PDZ-binding motif) with SCRIB; regulates TSHR trafficking and function. In terms of processing, glycosylated. Post-translationally, sulfated. Sulfation on Tyr-384 plays a role in thyrotropin receptor binding and activation.

It is found in the cell membrane. Its subcellular location is the basolateral cell membrane. In terms of biological role, receptor for the thyroid-stimulating hormone (TSH) or thyrotropin. Also acts as a receptor for the heterodimeric glycoprotein hormone (GPHA2:GPHB5) or thyrostimulin. The activity of this receptor is mediated by G proteins which activate adenylate cyclase. Plays a central role in controlling thyroid cell metabolism. The sequence is that of Thyrotropin receptor (TSHR) from Felis catus (Cat).